The sequence spans 106 residues: Testis-specific basic protein Y 2 (106 aa).

The protein belongs to the VCX/VCY family. In terms of assembly, interacts with MAP1S. Interacts with UBE3A (via HECT domain). Expressed exclusively in testis. Expressed in ejaculated spermatozoa of germ cell. Expressed in the nuclei of spermatogonia, spermatocytes, and round spermatids, except elongated spermatids (at protein level).

This chain is Testis-specific basic protein Y 2 (BPY2), found in Homo sapiens (Human).